A 386-amino-acid polypeptide reads, in one-letter code: 26S proteasome non-ATPase regulatory subunit 13 homolog A (386 aa).

Ala2 is subject to N-acetylalanine. In terms of domain architecture, PCI spans 173-347 (EFSDFYKSAL…GTIYVSWAQP (175 aa)).

It belongs to the proteasome subunit S11 family. Component of the 19S regulatory particle (RP/PA700) lid subcomplex of the 26S proteasome. The 26S proteasome is composed of a core protease (CP), known as the 20S proteasome, capped at one or both ends by the 19S regulatory particle (RP/PA700). The RP/PA700 complex is composed of at least 17 different subunits in two subcomplexes, the base and the lid, which form the portions proximal and distal to the 20S proteolytic core, respectively. Ubiquitous with highest expression in flowers.

Acts as a regulatory subunit of the 26S proteasome which is involved in the ATP-dependent degradation of ubiquitinated proteins. The protein is 26S proteasome non-ATPase regulatory subunit 13 homolog A (RPN9A) of Arabidopsis thaliana (Mouse-ear cress).